Reading from the N-terminus, the 473-residue chain is MKTLYSLRRFYPVETLFNGTLALAGRDQETTGFAWWAGNARLINLSGKLLGAHVAHAGLIVFWAGAMNLFEVAHFVPEKPMYEQGLILLPHLATLGWGVGPGGEVIDTFPYFVSGVLHLISSAVLGFGGIYHALLGPETLEESFPFFGYVWKDRNKMTTILGIHLILLGIGAFLLVLKALYFGGVYDTWAPGGGDVRKITNLTLSPSVIFGYLLKSPFGGEGWIVSVDDLEDIIGGHIWLGSICILGGIWHILTKPFAWARRAFVWSGEAYLSYSLAALSVFGFIACCFVWFNNTAYPSEFYGPTGPEASQAQAFTFLVRDQRLGANVGSAQGPTGLGKYLMRSPTGEVIFGGETMRFWDLRAPWLEPLRGPNGLDLSRLKKDIQPWQERRSAEYMTHAPLGSLNSVGGVATEINAVNYVSPRSWLATSHFVLGFFLFVGHLWHAGRARAAAAGFEKGIDRDFEPVLSMTPLN.

Positions 1-14 (MKTLYSLRRFYPVE) are excised as a propeptide. Threonine 15 is modified (N-acetylthreonine). Threonine 15 bears the Phosphothreonine mark. The next 5 membrane-spanning stretches (helical) occupy residues 69–93 (LFEVAHFVPEKPMYEQGLILLPHLA), 134–155 (LLGPETLEESFPFFGYVWKDRN), 178–200 (KALYFGGVYDTWAPGGGDVRKIT), 255–275 (KPFAWARRAFVWSGEAYLSYS), and 291–312 (WFNNTAYPSEFYGPTGPEASQA). Position 367 (glutamate 367) interacts with [CaMn4O5] cluster. The helical transmembrane segment at 447 to 471 (RARAAAAGFEKGIDRDFEPVLSMTP) threads the bilayer.

It belongs to the PsbB/PsbC family. PsbC subfamily. PSII is composed of 1 copy each of membrane proteins PsbA, PsbB, PsbC, PsbD, PsbE, PsbF, PsbH, PsbI, PsbJ, PsbK, PsbL, PsbM, PsbT, PsbX, PsbY, PsbZ, Psb30/Ycf12, at least 3 peripheral proteins of the oxygen-evolving complex and a large number of cofactors. It forms dimeric complexes. It depends on Binds multiple chlorophylls and provides some of the ligands for the Ca-4Mn-5O cluster of the oxygen-evolving complex. It may also provide a ligand for a Cl- that is required for oxygen evolution. PSII binds additional chlorophylls, carotenoids and specific lipids. as a cofactor.

The protein localises to the plastid. Its subcellular location is the chloroplast thylakoid membrane. Its function is as follows. One of the components of the core complex of photosystem II (PSII). It binds chlorophyll and helps catalyze the primary light-induced photochemical processes of PSII. PSII is a light-driven water:plastoquinone oxidoreductase, using light energy to abstract electrons from H(2)O, generating O(2) and a proton gradient subsequently used for ATP formation. This is Photosystem II CP43 reaction center protein from Drimys granadensis.